A 263-amino-acid chain; its full sequence is Virulence plasmid protein pGP6-D-related protein (263 aa).

The protein belongs to the UPF0137 (pGP6-D) family.

The sequence is that of Virulence plasmid protein pGP6-D-related protein from Chlamydia trachomatis serovar D (strain ATCC VR-885 / DSM 19411 / UW-3/Cx).